We begin with the raw amino-acid sequence, 577 residues long: Arginine--tRNA ligase (577 aa).

The short motif at 132–142 (ANPTGPLHVGH) is the 'HIGH' region element.

This sequence belongs to the class-I aminoacyl-tRNA synthetase family. Monomer.

It is found in the cytoplasm. The catalysed reaction is tRNA(Arg) + L-arginine + ATP = L-arginyl-tRNA(Arg) + AMP + diphosphate. The sequence is that of Arginine--tRNA ligase from Janthinobacterium sp. (strain Marseille) (Minibacterium massiliensis).